The primary structure comprises 284 residues: Undecaprenyl-diphosphatase (284 aa).

The next 8 helical transmembrane spans lie at 7-27 (IILG…TGHL), 44-64 (EMFD…LYFH), 90-110 (LWLK…PLND), 116-136 (FYHF…FIVI), 167-187 (VLSL…ALLI), 197-217 (FTFF…ILHF), 229-249 (FGVL…AIKF), and 259-279 (FTFF…YAAF).

This sequence belongs to the UppP family.

The protein localises to the cell membrane. The catalysed reaction is di-trans,octa-cis-undecaprenyl diphosphate + H2O = di-trans,octa-cis-undecaprenyl phosphate + phosphate + H(+). Functionally, catalyzes the dephosphorylation of undecaprenyl diphosphate (UPP). Confers resistance to bacitracin. In Lactococcus lactis subsp. cremoris (strain SK11), this protein is Undecaprenyl-diphosphatase.